The following is a 309-amino-acid chain: tRNA dimethylallyltransferase (309 aa).

Residue 11–18 participates in ATP binding; sequence GPTASGKS. 13-18 contributes to the substrate binding site; the sequence is TASGKS. Interaction with substrate tRNA stretches follow at residues 36–39 and 160–164; these read DSMQ and QRLIR.

Belongs to the IPP transferase family. In terms of assembly, monomer. Requires Mg(2+) as cofactor.

The enzyme catalyses adenosine(37) in tRNA + dimethylallyl diphosphate = N(6)-dimethylallyladenosine(37) in tRNA + diphosphate. In terms of biological role, catalyzes the transfer of a dimethylallyl group onto the adenine at position 37 in tRNAs that read codons beginning with uridine, leading to the formation of N6-(dimethylallyl)adenosine (i(6)A). The chain is tRNA dimethylallyltransferase from Rickettsia felis (strain ATCC VR-1525 / URRWXCal2) (Rickettsia azadi).